Reading from the N-terminus, the 245-residue chain is 1-(5-phosphoribosyl)-5-[(5-phosphoribosylamino)methylideneamino] imidazole-4-carboxamide isomerase (245 aa).

Asp7 functions as the Proton acceptor in the catalytic mechanism. The active-site Proton donor is Asp129.

The protein belongs to the HisA/HisF family.

It localises to the cytoplasm. The enzyme catalyses 1-(5-phospho-beta-D-ribosyl)-5-[(5-phospho-beta-D-ribosylamino)methylideneamino]imidazole-4-carboxamide = 5-[(5-phospho-1-deoxy-D-ribulos-1-ylimino)methylamino]-1-(5-phospho-beta-D-ribosyl)imidazole-4-carboxamide. Its pathway is amino-acid biosynthesis; L-histidine biosynthesis; L-histidine from 5-phospho-alpha-D-ribose 1-diphosphate: step 4/9. The sequence is that of 1-(5-phosphoribosyl)-5-[(5-phosphoribosylamino)methylideneamino] imidazole-4-carboxamide isomerase from Aliivibrio fischeri (strain MJ11) (Vibrio fischeri).